Here is a 376-residue protein sequence, read N- to C-terminus: Lipid-A-disaccharide synthase (376 aa).

This sequence belongs to the LpxB family.

It carries out the reaction a lipid X + a UDP-2-N,3-O-bis[(3R)-3-hydroxyacyl]-alpha-D-glucosamine = a lipid A disaccharide + UDP + H(+). Its pathway is bacterial outer membrane biogenesis; LPS lipid A biosynthesis. Condensation of UDP-2,3-diacylglucosamine and 2,3-diacylglucosamine-1-phosphate to form lipid A disaccharide, a precursor of lipid A, a phosphorylated glycolipid that anchors the lipopolysaccharide to the outer membrane of the cell. This chain is Lipid-A-disaccharide synthase, found in Coxiella burnetii (strain Dugway 5J108-111).